Here is a 111-residue protein sequence, read N- to C-terminus: Universal stress protein B (111 aa).

Helical transmembrane passes span 1 to 21 (MISTVALFWGLCVVCIINMAR) and 90 to 110 (FILTSALCGLVVISLIALLIW).

The protein belongs to the universal stress protein B family.

Its subcellular location is the cell inner membrane. This chain is Universal stress protein B, found in Escherichia fergusonii (strain ATCC 35469 / DSM 13698 / CCUG 18766 / IAM 14443 / JCM 21226 / LMG 7866 / NBRC 102419 / NCTC 12128 / CDC 0568-73).